Reading from the N-terminus, the 432-residue chain is Peptidyl-prolyl cis-trans isomerase cyp6 (432 aa).

Positions 1 to 168 (MSVLIETTVG…RDIRIKHTII (168 aa)) constitute a PPIase cyclophilin-type domain. Ser-206 bears the Phosphoserine mark. The region spanning 244-322 (NVLFVCKLNP…SRIHVDFSQS (79 aa)) is the RRM domain. The segment at 330–432 (YNSNRDRKRS…DRRYRDDRYR (103 aa)) is disordered. 3 stretches are compositionally biased toward basic and acidic residues: residues 341–366 (SRSD…DDYR), 373–395 (DHRD…DDRS), and 406–432 (NCDD…DRYR).

Belongs to the cyclophilin-type PPIase family. PPIL4 subfamily.

The protein localises to the nucleus. It catalyses the reaction [protein]-peptidylproline (omega=180) = [protein]-peptidylproline (omega=0). In terms of biological role, PPIases accelerate the folding of proteins. It catalyzes the cis-trans isomerization of proline imidic peptide bonds in oligopeptides. The protein is Peptidyl-prolyl cis-trans isomerase cyp6 (cyp6) of Schizosaccharomyces pombe (strain 972 / ATCC 24843) (Fission yeast).